A 135-amino-acid polypeptide reads, in one-letter code: Large ribosomal subunit protein uL22c (135 aa).

It belongs to the universal ribosomal protein uL22 family. Part of the 50S ribosomal subunit.

Its subcellular location is the plastid. In terms of biological role, this protein binds specifically to 23S rRNA. Functionally, the globular domain of the protein is located near the polypeptide exit tunnel on the outside of the subunit, while an extended beta-hairpin is found that lines the wall of the exit tunnel in the center of the 70S ribosome. The protein is Large ribosomal subunit protein uL22c (rpl22) of Cuscuta reflexa (Southern Asian dodder).